We begin with the raw amino-acid sequence, 195 residues long: dITP/XTP pyrophosphatase (195 aa).

Position 8–13 (8–13 (SNNQGK)) interacts with substrate. 2 residues coordinate Mg(2+): Glu39 and Asp68. The active-site Proton acceptor is the Asp68. Residues Ser69, 149–152 (FGYD), Lys172, and 177–178 (HR) each bind substrate.

The protein belongs to the HAM1 NTPase family. In terms of assembly, homodimer. It depends on Mg(2+) as a cofactor.

The enzyme catalyses XTP + H2O = XMP + diphosphate + H(+). It catalyses the reaction dITP + H2O = dIMP + diphosphate + H(+). It carries out the reaction ITP + H2O = IMP + diphosphate + H(+). Pyrophosphatase that catalyzes the hydrolysis of nucleoside triphosphates to their monophosphate derivatives, with a high preference for the non-canonical purine nucleotides XTP (xanthosine triphosphate), dITP (deoxyinosine triphosphate) and ITP. Seems to function as a house-cleaning enzyme that removes non-canonical purine nucleotides from the nucleotide pool, thus preventing their incorporation into DNA/RNA and avoiding chromosomal lesions. The polypeptide is dITP/XTP pyrophosphatase (Staphylococcus aureus (strain MRSA252)).